Here is a 200-residue protein sequence, read N- to C-terminus: Dephospho-CoA kinase (200 aa).

Residues 4-200 enclose the DPCK domain; the sequence is TIGLTGSVAT…TFIERFVKNK (197 aa). 12–17 is an ATP binding site; sequence ATGKST.

It belongs to the CoaE family.

It is found in the cytoplasm. The enzyme catalyses 3'-dephospho-CoA + ATP = ADP + CoA + H(+). It participates in cofactor biosynthesis; coenzyme A biosynthesis; CoA from (R)-pantothenate: step 5/5. Catalyzes the phosphorylation of the 3'-hydroxyl group of dephosphocoenzyme A to form coenzyme A. The protein is Dephospho-CoA kinase of Listeria monocytogenes serovar 1/2a (strain ATCC BAA-679 / EGD-e).